We begin with the raw amino-acid sequence, 338 residues long: Ketol-acid reductoisomerase (NADP(+)) (338 aa).

The region spanning 1–181 is the KARI N-terminal Rossmann domain; sequence MKVYYDKDAD…GGGRTGIIET (181 aa). NADP(+) contacts are provided by residues 24 to 27, Arg-47, Ser-50, Ser-52, and 82 to 85; these read YGSQ and DEFQ. His-107 is a catalytic residue. Gly-133 contributes to the NADP(+) binding site. Residues 182-327 form the KARI C-terminal knotted domain; the sequence is TFKDETETDL…AKLRSMMPWI (146 aa). Mg(2+) contacts are provided by Asp-190, Glu-194, Glu-226, and Glu-230. Ser-251 serves as a coordination point for substrate.

The protein belongs to the ketol-acid reductoisomerase family. It depends on Mg(2+) as a cofactor.

The catalysed reaction is (2R)-2,3-dihydroxy-3-methylbutanoate + NADP(+) = (2S)-2-acetolactate + NADPH + H(+). It catalyses the reaction (2R,3R)-2,3-dihydroxy-3-methylpentanoate + NADP(+) = (S)-2-ethyl-2-hydroxy-3-oxobutanoate + NADPH + H(+). Its pathway is amino-acid biosynthesis; L-isoleucine biosynthesis; L-isoleucine from 2-oxobutanoate: step 2/4. It participates in amino-acid biosynthesis; L-valine biosynthesis; L-valine from pyruvate: step 2/4. Its function is as follows. Involved in the biosynthesis of branched-chain amino acids (BCAA). Catalyzes an alkyl-migration followed by a ketol-acid reduction of (S)-2-acetolactate (S2AL) to yield (R)-2,3-dihydroxy-isovalerate. In the isomerase reaction, S2AL is rearranged via a Mg-dependent methyl migration to produce 3-hydroxy-3-methyl-2-ketobutyrate (HMKB). In the reductase reaction, this 2-ketoacid undergoes a metal-dependent reduction by NADPH to yield (R)-2,3-dihydroxy-isovalerate. The polypeptide is Ketol-acid reductoisomerase (NADP(+)) (Thiobacillus denitrificans (strain ATCC 25259 / T1)).